Consider the following 97-residue polypeptide: Protein RnfH (97 aa).

This sequence belongs to the UPF0125 (RnfH) family.

The protein is Protein RnfH of Halorhodospira halophila (strain DSM 244 / SL1) (Ectothiorhodospira halophila (strain DSM 244 / SL1)).